A 245-amino-acid chain; its full sequence is Flavin-dependent thymidylate synthase (245 aa).

The ThyX domain occupies 6–220 (PRVELLAHTP…PELFAHAGAK (215 aa)). Residues serine 65, 89–91 (RHR), and glutamine 97 each bind FAD. Residues 86–89 (QLVR), 97–101 (QQSQR), and arginine 159 contribute to the dUMP site. The ThyX motif signature appears at 89-99 (RHRIASFSQQS). FAD is bound by residues 175-177 (NCR) and histidine 181. Arginine 186 provides a ligand contact to dUMP. Arginine 186 serves as the catalytic Involved in ionization of N3 of dUMP, leading to its activation.

This sequence belongs to the thymidylate synthase ThyX family. Homotetramer. FAD is required as a cofactor.

It catalyses the reaction dUMP + (6R)-5,10-methylene-5,6,7,8-tetrahydrofolate + NADPH + H(+) = dTMP + (6S)-5,6,7,8-tetrahydrofolate + NADP(+). It participates in pyrimidine metabolism; dTTP biosynthesis. Its function is as follows. Catalyzes the reductive methylation of 2'-deoxyuridine-5'-monophosphate (dUMP) to 2'-deoxythymidine-5'-monophosphate (dTMP) while utilizing 5,10-methylenetetrahydrofolate (mTHF) as the methyl donor, and NADPH and FADH(2) as the reductant. In Nitratidesulfovibrio vulgaris (strain ATCC 29579 / DSM 644 / CCUG 34227 / NCIMB 8303 / VKM B-1760 / Hildenborough) (Desulfovibrio vulgaris), this protein is Flavin-dependent thymidylate synthase.